The following is a 92-amino-acid chain: Small ribosomal subunit protein uS19 (92 aa).

It belongs to the universal ribosomal protein uS19 family.

Functionally, protein S19 forms a complex with S13 that binds strongly to the 16S ribosomal RNA. The sequence is that of Small ribosomal subunit protein uS19 from Nitrobacter hamburgensis (strain DSM 10229 / NCIMB 13809 / X14).